The primary structure comprises 199 residues: dITP/XTP pyrophosphatase (199 aa).

7-12 contacts substrate; the sequence is SANKGK. Positions 38 and 73 each coordinate Mg(2+). The active-site Proton acceptor is Asp-73. Residues Ser-74, 155–158, Lys-178, and 183–184 each bind substrate; these read FGYD and HR.

It belongs to the HAM1 NTPase family. Homodimer. It depends on Mg(2+) as a cofactor.

It carries out the reaction XTP + H2O = XMP + diphosphate + H(+). The enzyme catalyses dITP + H2O = dIMP + diphosphate + H(+). The catalysed reaction is ITP + H2O = IMP + diphosphate + H(+). Functionally, pyrophosphatase that catalyzes the hydrolysis of nucleoside triphosphates to their monophosphate derivatives, with a high preference for the non-canonical purine nucleotides XTP (xanthosine triphosphate), dITP (deoxyinosine triphosphate) and ITP. Seems to function as a house-cleaning enzyme that removes non-canonical purine nucleotides from the nucleotide pool, thus preventing their incorporation into DNA/RNA and avoiding chromosomal lesions. This chain is dITP/XTP pyrophosphatase, found in Aliarcobacter butzleri (strain RM4018) (Arcobacter butzleri).